The following is a 265-amino-acid chain: Probable cell division protein kinase ECU08_0230 (265 aa).

The Protein kinase domain occupies 4 to 263 (YILGALIGSG…IMEILENEYG (260 aa)). ATP is bound by residues 10–18 (IGSGTYGEV) and lysine 33. The active-site Proton acceptor is aspartate 121.

Belongs to the protein kinase superfamily. CMGC Ser/Thr protein kinase family. CDC2/CDKX subfamily.

It localises to the nucleus. The catalysed reaction is L-seryl-[protein] + ATP = O-phospho-L-seryl-[protein] + ADP + H(+). It catalyses the reaction L-threonyl-[protein] + ATP = O-phospho-L-threonyl-[protein] + ADP + H(+). Functionally, may play a role in the control of the eukaryotic cell cycle. The chain is Probable cell division protein kinase ECU08_0230 from Encephalitozoon cuniculi (strain GB-M1) (Microsporidian parasite).